The sequence spans 210 residues: Probable GTP-binding protein EngB (210 aa).

The region spanning 24–199 (QGCEVAFAGR…WEVLGRWLDL (176 aa)) is the EngB-type G domain. Residues 32-39 (GRSNAGKS), 59-63 (GRTRM), 77-80 (DLPG), 144-147 (TKSD), and 178-180 (FSS) each bind GTP. Residues Ser-39 and Thr-61 each contribute to the Mg(2+) site.

This sequence belongs to the TRAFAC class TrmE-Era-EngA-EngB-Septin-like GTPase superfamily. EngB GTPase family. It depends on Mg(2+) as a cofactor.

Its function is as follows. Necessary for normal cell division and for the maintenance of normal septation. This is Probable GTP-binding protein EngB from Methylococcus capsulatus (strain ATCC 33009 / NCIMB 11132 / Bath).